The sequence spans 367 residues: Leu/Ile/Val-binding protein (367 aa).

An N-terminal signal peptide occupies residues 1-23; the sequence is MNIKGKALLAGCIALAFSNMALA. A disulfide bond links cysteine 76 and cysteine 101.

Belongs to the leucine-binding protein family.

Its subcellular location is the periplasm. Functionally, this protein is a component of the leucine, isoleucine, valine, (threonine) transport system, which is one of the two periplasmic binding protein-dependent transport systems of the high-affinity transport of the branched-chain amino acids. In Escherichia coli O157:H7, this protein is Leu/Ile/Val-binding protein (livJ).